Reading from the N-terminus, the 172-residue chain is Type IV secretion system putative outer membrane lipoprotein BAB2_0057 (172 aa).

The signal sequence occupies residues 1 to 15; sequence MRTLVMVACAVSLAA. Cysteine 16 carries N-palmitoyl cysteine lipidation. The S-diacylglycerol cysteine moiety is linked to residue cysteine 16. An OmpA-like domain is found at 58-172; sequence WPARPPKQTV…RRVDIEILRK (115 aa).

It localises to the cell outer membrane. Its function is as follows. The virB operon is essential for intracellular survival and is not involved in the invasion process. Constitutes a major determinant of virulence in mice. This protein is essential for pathogenesis in mice but is not required for intracellular survival. In Brucella abortus (strain 2308), this protein is Type IV secretion system putative outer membrane lipoprotein BAB2_0057.